A 363-amino-acid polypeptide reads, in one-letter code: UDP-N-acetylglucosamine--N-acetylmuramyl-(pentapeptide) pyrophosphoryl-undecaprenol N-acetylglucosamine transferase (363 aa).

UDP-N-acetyl-alpha-D-glucosamine is bound by residues 14–16, Asn-122, Arg-163, Ser-190, and Gln-285; that span reads TGG.

The protein belongs to the glycosyltransferase 28 family. MurG subfamily.

It localises to the cell inner membrane. It catalyses the reaction di-trans,octa-cis-undecaprenyl diphospho-N-acetyl-alpha-D-muramoyl-L-alanyl-D-glutamyl-meso-2,6-diaminopimeloyl-D-alanyl-D-alanine + UDP-N-acetyl-alpha-D-glucosamine = di-trans,octa-cis-undecaprenyl diphospho-[N-acetyl-alpha-D-glucosaminyl-(1-&gt;4)]-N-acetyl-alpha-D-muramoyl-L-alanyl-D-glutamyl-meso-2,6-diaminopimeloyl-D-alanyl-D-alanine + UDP + H(+). The protein operates within cell wall biogenesis; peptidoglycan biosynthesis. Functionally, cell wall formation. Catalyzes the transfer of a GlcNAc subunit on undecaprenyl-pyrophosphoryl-MurNAc-pentapeptide (lipid intermediate I) to form undecaprenyl-pyrophosphoryl-MurNAc-(pentapeptide)GlcNAc (lipid intermediate II). In Prochlorococcus marinus (strain MIT 9301), this protein is UDP-N-acetylglucosamine--N-acetylmuramyl-(pentapeptide) pyrophosphoryl-undecaprenol N-acetylglucosamine transferase.